The following is a 568-amino-acid chain: Sentrin-specific protease 3 (568 aa).

Positions 1-119 (MKETIQGTGS…PSHRKTCSQR (119 aa)) are disordered. A phosphoserine mark is found at serine 52, serine 71, and serine 73. Over residues 72–87 (ASEEEEEEEEEDEEEV) the composition is skewed to acidic residues. A compositionally biased stretch (basic residues) spans 106 to 119 (RALRPSHRKTCSQR). Short sequence motifs (nuclear localization signal) lie at residues 119–122 (RRRR) and 147–153 (RHRGRRR). Residues 155–174 (LAHPKNHLSPQEGGATPQVP) are disordered. At serine 163 the chain carries Phosphoserine. Threonine 170 is subject to Phosphothreonine. Residues serine 175, serine 182, serine 206, and serine 226 each carry the phosphoserine modification. The tract at residues 380–537 (HVLTMDDLGT…AFVLQYCKHL (158 aa)) is protease. Active-site residues include histidine 459 and aspartate 476. Cysteine 526 functions as the Nucleophile in the catalytic mechanism.

This sequence belongs to the peptidase C48 family. As to quaternary structure, component of some MLL1/MLL complex, at least composed of the core components KMT2A/MLL1, ASH2L, HCFC1/HCF1, WDR5 and RBBP5, as well as the facultative components BACC1, CHD8, E2F6, HSP70, INO80C, KANSL1, LAS1L, MAX, MCRS1, MGA, MYST1/MOF, PELP1, PHF20, PRP31, RING2, RUVB1/TIP49A, RUVB2/TIP49B, SENP3, TAF1, TAF4, TAF6, TAF7, TAF9 and TEX10. Interacts with EP300, NPM1 and CDCA8. Component of the 5FMC complex, at least composed of PELP1, LAS1L, TEX10, WDR18 and SENP3; the complex interacts with methylated CHTOP and ZNF148. Interacts with NOL9. Interacts with CCAR2.

Its subcellular location is the nucleus. It localises to the nucleolus. It is found in the nucleoplasm. The protein localises to the cytoplasm. With respect to regulation, on oxidative stress, SENP3 degradation is blocked by inhibition of its ubiquitination, which stabilizes it as it accumulates in the nucleoplasm. Protease that releases SUMO2 and SUMO3 monomers from sumoylated substrates, but has only weak activity against SUMO1 conjugates. Deconjugates SUMO2 from MEF2D, which increases its transcriptional activation capability. Deconjugates SUMO2 and SUMO3 from CDCA8. Redox sensor that, when redistributed into nucleoplasm, can act as an effector to enhance HIF1A transcriptional activity by desumoylating EP300. Required for rRNA processing through deconjugation of SUMO2 and SUMO3 from nucleophosmin, NPM1. Plays a role in the regulation of sumoylation status of ZNF148. Functions as a component of the Five Friends of Methylated CHTOP (5FMC) complex; the 5FMC complex is recruited to ZNF148 by methylated CHTOP, leading to desumoylation of ZNF148 and subsequent transactivation of ZNF148 target genes. Deconjugates SUMO2 from KAT5. Catalyzes desumoylation of MRE11. The polypeptide is Sentrin-specific protease 3 (Senp3) (Mus musculus (Mouse)).